The primary structure comprises 505 residues: MKKKLVLIIIDGLGLRLESQGNGFALAKTPVFDRLFQEYPNSLIAASGQEVGLPEGQMGNSEVGHLNIGAGFVVYTGISIINNALKTGKFFENEKFILAFRHSIKTGFPLQIMGLFSPGGVHSHQDHLFALIDFAANFGVKKLNLHLFGDGRDVGPKSIKPWIKMLNLKLKNYEDYKIASISGRFYSMDRDKMFDRVELGYNALLGKAENTFTDPIDYINFQYEKGVSDEFFEPAINLKVNKKDFLADDHPVIFFNFRPDRARQLSHLILQTDLYEQKPKNPIKTDVFVSMMKYEGINCLVAFEEMRVENPLGKLISMAGFRQLRLAETQKYAHVTFFVDGGVELELENSDRILIDSLKVQSYADFPQMSAVEITDKLLEVGQNYDFIIMNFANPDMVGHTGDLKATIKAVEILDFQIGRICKWAEEKNFDFFITADHGNAELTEDENGNPSTKHTTFPVMLISSDKTIKLKSGKLANIAPTILDYLGLDKHPDMDHDSLIIKDK.

2 residues coordinate Mn(2+): D11 and S61. Catalysis depends on S61, which acts as the Phosphoserine intermediate. Substrate is bound by residues H122, 152-153, R184, R190, 258-261, and K331; these read RD and RPDR. D396, H400, D437, H438, and H455 together coordinate Mn(2+).

It belongs to the BPG-independent phosphoglycerate mutase family. Monomer. Mn(2+) is required as a cofactor.

It carries out the reaction (2R)-2-phosphoglycerate = (2R)-3-phosphoglycerate. It participates in carbohydrate degradation; glycolysis; pyruvate from D-glyceraldehyde 3-phosphate: step 3/5. In terms of biological role, catalyzes the interconversion of 2-phosphoglycerate and 3-phosphoglycerate. The chain is 2,3-bisphosphoglycerate-independent phosphoglycerate mutase from Mesomycoplasma hyopneumoniae (strain J / ATCC 25934 / NCTC 10110) (Mycoplasma hyopneumoniae).